Consider the following 330-residue polypeptide: Putative aminopeptidase (330 aa).

Residues H65 and D168 each contribute to the a divalent metal cation site. Catalysis depends on E198, which acts as the Proton acceptor. A divalent metal cation-binding residues include E199, D221, and H307.

The protein belongs to the peptidase M42 family. A divalent metal cation is required as a cofactor.

In Acetivibrio thermocellus (Hungateiclostridium thermocellum), this protein is Putative aminopeptidase (celM).